A 488-amino-acid polypeptide reads, in one-letter code: Monodehydroascorbate reductase 4, peroxisomal (488 aa).

Residues 1–3 are Cytoplasmic-facing; that stretch reads MGR. A helical membrane pass occupies residues 4-24; that stretch reads AFVYVILGGGVAAGYAALEFT. Residues 12-15, Glu-39, Arg-46, Lys-51, and 145-146 contribute to the FAD site; these read GGVA and RD. At 25-458 the chain is on the peroxisomal side; that stretch reads RRGVSDGELC…SASVVMIKKP (434 aa). Residues 170–176, Glu-194, Arg-200, and Gly-259 each bind NAD(+); that span reads GGYIGME. Residue 172–176 coordinates NADP(+); that stretch reads YIGME. Arg-200 and Gly-259 together coordinate NADP(+). FAD is bound at residue Asp-296. Residue 312-313 participates in NAD(+) binding; sequence EH. 312–313 provides a ligand contact to NADP(+); that stretch reads EH. Residue Val-314 coordinates FAD. Position 318 (Arg-318) interacts with L-ascorbate. Tyr-344 lines the FAD pocket. NAD(+) is bound at residue Tyr-344. An NADP(+)-binding site is contributed by Tyr-344. Residue Arg-346 participates in L-ascorbate binding. A helical membrane pass occupies residues 459 to 479; it reads LYVWHAATGVVVAASVAAFAF. Residues 480 to 488 lie on the Cytoplasmic side of the membrane; sequence WYGRRRRRW.

The protein belongs to the FAD-dependent oxidoreductase family. FAD is required as a cofactor.

Its subcellular location is the peroxisome membrane. The catalysed reaction is 2 monodehydro-L-ascorbate radical + NADH + H(+) = 2 L-ascorbate + NAD(+). Catalyzes the conversion of monodehydroascorbate to ascorbate, oxidizing NADH in the process. Involved in the detoxification of H(2)O(2) that escapes the peroxisome and causes oxidative damage to oil bodies. In Arabidopsis thaliana (Mouse-ear cress), this protein is Monodehydroascorbate reductase 4, peroxisomal.